The primary structure comprises 203 residues: Glycerol-3-phosphate acyltransferase (203 aa).

A run of 4 helical transmembrane segments spans residues L4–I24, P80–F100, A116–I136, and G138–V158.

Belongs to the PlsY family. In terms of assembly, probably interacts with PlsX.

It localises to the cell inner membrane. The enzyme catalyses an acyl phosphate + sn-glycerol 3-phosphate = a 1-acyl-sn-glycero-3-phosphate + phosphate. Its pathway is lipid metabolism; phospholipid metabolism. Its function is as follows. Catalyzes the transfer of an acyl group from acyl-phosphate (acyl-PO(4)) to glycerol-3-phosphate (G3P) to form lysophosphatidic acid (LPA). This enzyme utilizes acyl-phosphate as fatty acyl donor, but not acyl-CoA or acyl-ACP. This Photobacterium profundum (strain SS9) protein is Glycerol-3-phosphate acyltransferase.